The chain runs to 221 residues: GTP-binding nuclear protein Ran2 (221 aa).

Residues 10 to 174 (DYPSFKLVIV…LYLARKLAGD (165 aa)) form the Small GTPase Ran-type domain. GTP is bound at residue 21–28 (DGGTGKTT). The segment at 40–48 (KKYEPTIGV) is switch-I. GTP-binding positions include G71, 125–128 (NKVD), and 153–155 (SAK). A switch-II region spans residues 71–87 (GQEKFGGLRDGYYIHGQ).

The protein belongs to the small GTPase superfamily. Ran family. In terms of assembly, found in a nuclear export complex with RanGTP, exportin and pre-miRNA.

The protein localises to the nucleus. In terms of biological role, GTP-binding protein involved in nucleocytoplasmic transport. Required for the import of protein into the nucleus and also for RNA export. Involved in chromatin condensation and control of cell cycle. This chain is GTP-binding nuclear protein Ran2 (RAN2), found in Solanum lycopersicum (Tomato).